Reading from the N-terminus, the 292-residue chain is MWIPYDLRASLKGETDRETLRLSRADGQPRQFLVGFFLRNPVTQAWELDLAAEDGLPELPAVPAGASFSICPNEAGKLAEVIYRLPARSATEALELAHADLQPRLLAWLARVGRGMAIAGWRVADMTHRARWRSTPFRPSAMSLDFALAPVDRDLAPVVELFQRARNAPDPASRLLAAFAVLSAAVGHPAMAGSGAATLSITQDMLIHSGAIVLPDPLMGIALADLIALLRPEHDRLVGRDGVLLPVLDDLAGQKRLSLLANLADLVAHRLIQAELAARHRDAPAPAMAAGA.

It participates in one-carbon metabolism; methylamine degradation. This Paracoccus versutus (Thiobacillus versutus) protein is Methylamine utilization protein MauJ (mauJ).